The following is a 247-amino-acid chain: Cell division protein ZapD (247 aa).

Belongs to the ZapD family. In terms of assembly, interacts with FtsZ.

Its subcellular location is the cytoplasm. Cell division factor that enhances FtsZ-ring assembly. Directly interacts with FtsZ and promotes bundling of FtsZ protofilaments, with a reduction in FtsZ GTPase activity. The sequence is that of Cell division protein ZapD from Cronobacter sakazakii (strain ATCC BAA-894) (Enterobacter sakazakii).